A 467-amino-acid polypeptide reads, in one-letter code: 3-isopropylmalate dehydratase large subunit (467 aa).

Cys349, Cys409, and Cys412 together coordinate [4Fe-4S] cluster. Residues 422-443 are disordered; it reads PGQRSASTSNRNFEGRQGRGGR.

Belongs to the aconitase/IPM isomerase family. LeuC type 1 subfamily. In terms of assembly, heterodimer of LeuC and LeuD. The cofactor is [4Fe-4S] cluster.

It catalyses the reaction (2R,3S)-3-isopropylmalate = (2S)-2-isopropylmalate. Its pathway is amino-acid biosynthesis; L-leucine biosynthesis; L-leucine from 3-methyl-2-oxobutanoate: step 2/4. Catalyzes the isomerization between 2-isopropylmalate and 3-isopropylmalate, via the formation of 2-isopropylmaleate. The protein is 3-isopropylmalate dehydratase large subunit of Paramagnetospirillum magneticum (strain ATCC 700264 / AMB-1) (Magnetospirillum magneticum).